The sequence spans 418 residues: Light-independent protochlorophyllide reductase subunit N (418 aa).

Positions 17, 42, and 103 each coordinate [4Fe-4S] cluster.

The protein belongs to the BchN/ChlN family. Protochlorophyllide reductase is composed of three subunits; ChlL, ChlN and ChlB. Forms a heterotetramer of two ChlB and two ChlN subunits. The cofactor is [4Fe-4S] cluster.

The enzyme catalyses chlorophyllide a + oxidized 2[4Fe-4S]-[ferredoxin] + 2 ADP + 2 phosphate = protochlorophyllide a + reduced 2[4Fe-4S]-[ferredoxin] + 2 ATP + 2 H2O. It participates in porphyrin-containing compound metabolism; chlorophyll biosynthesis (light-independent). Its function is as follows. Component of the dark-operative protochlorophyllide reductase (DPOR) that uses Mg-ATP and reduced ferredoxin to reduce ring D of protochlorophyllide (Pchlide) to form chlorophyllide a (Chlide). This reaction is light-independent. The NB-protein (ChlN-ChlB) is the catalytic component of the complex. The sequence is that of Light-independent protochlorophyllide reductase subunit N from Prochlorococcus marinus (strain MIT 9515).